Reading from the N-terminus, the 602-residue chain is tRNA uridine 5-carboxymethylaminomethyl modification enzyme MnmG (602 aa).

FAD is bound at residue 10–15 (GGGHAG). Positions 217 to 242 (DPQPRGFTGRPGPRAAESPTWQTHTT) are disordered. 267–281 (GPRYCPSIEDKVVRF) contacts NAD(+).

The protein belongs to the MnmG family. As to quaternary structure, homodimer. Heterotetramer of two MnmE and two MnmG subunits. FAD is required as a cofactor.

The protein localises to the cytoplasm. In terms of biological role, NAD-binding protein involved in the addition of a carboxymethylaminomethyl (cmnm) group at the wobble position (U34) of certain tRNAs, forming tRNA-cmnm(5)s(2)U34. The protein is tRNA uridine 5-carboxymethylaminomethyl modification enzyme MnmG of Deinococcus geothermalis (strain DSM 11300 / CIP 105573 / AG-3a).